Reading from the N-terminus, the 478-residue chain is Serine/threonine-protein phosphatase T (478 aa).

TPR repeat units lie at residues 9 to 42 (ATAL…YDRE), 43 to 76 (PSFF…DPAY), and 78 to 110 (KAYW…EPNN). The interval 151–463 (AVDDSYDGVR…QVFEAVPHPD (313 aa)) is catalytic. D221, H223, D250, and N282 together coordinate Mn(2+). The Proton donor/acceptor role is filled by H283. Residues H331 and H408 each contribute to the Mn(2+) site.

This sequence belongs to the PPP phosphatase family. PP-5 (PP-T) subfamily. Mg(2+) is required as a cofactor. Mn(2+) serves as cofactor.

The protein resides in the nucleus. The catalysed reaction is O-phospho-L-seryl-[protein] + H2O = L-seryl-[protein] + phosphate. It catalyses the reaction O-phospho-L-threonyl-[protein] + H2O = L-threonyl-[protein] + phosphate. In terms of biological role, protein phosphatase that specifically binds to and dephosphorylates the molecular chaperone Hsp90. Dephosphorylation positively regulates the Hsp90 chaperone machinery. The sequence is that of Serine/threonine-protein phosphatase T from Aspergillus oryzae (strain ATCC 42149 / RIB 40) (Yellow koji mold).